The following is a 336-amino-acid chain: Dihydroorotate dehydrogenase (quinone) (336 aa).

Residues 62–66 and Thr86 each bind FMN; that span reads AGLDK. Substrate is bound at residue Lys66. 111 to 115 is a binding site for substrate; it reads NRMGF. FMN is bound by residues Asn139 and Asn172. Position 172 (Asn172) interacts with substrate. Ser175 acts as the Nucleophile in catalysis. A substrate-binding site is contributed by Asn177. 2 residues coordinate FMN: Lys217 and Thr245. 246 to 247 serves as a coordination point for substrate; sequence NT. FMN-binding positions include Gly268, Gly297, and 318–319; that span reads YS.

This sequence belongs to the dihydroorotate dehydrogenase family. Type 2 subfamily. Monomer. FMN is required as a cofactor.

The protein resides in the cell membrane. It catalyses the reaction (S)-dihydroorotate + a quinone = orotate + a quinol. It functions in the pathway pyrimidine metabolism; UMP biosynthesis via de novo pathway; orotate from (S)-dihydroorotate (quinone route): step 1/1. Functionally, catalyzes the conversion of dihydroorotate to orotate with quinone as electron acceptor. The protein is Dihydroorotate dehydrogenase (quinone) of Klebsiella pneumoniae (strain 342).